Consider the following 331-residue polypeptide: L-lactate dehydrogenase A chain (331 aa).

NAD(+) is bound by residues 29–57 and arginine 98; that span reads GMVG…MEDK. Arginine 105, asparagine 137, and arginine 168 together coordinate substrate. Residue asparagine 137 coordinates NAD(+). Residue histidine 192 is the Proton acceptor of the active site. Threonine 247 is a binding site for substrate.

It belongs to the LDH/MDH superfamily. LDH family. In terms of assembly, homotetramer.

It localises to the cytoplasm. It catalyses the reaction (S)-lactate + NAD(+) = pyruvate + NADH + H(+). Its pathway is fermentation; pyruvate fermentation to lactate; (S)-lactate from pyruvate: step 1/1. In terms of biological role, interconverts simultaneously and stereospecifically pyruvate and lactate with concomitant interconversion of NADH and NAD(+). The protein is L-lactate dehydrogenase A chain (ldha) of Gobionotothen gibberifrons (Humped rockcod).